Reading from the N-terminus, the 64-residue chain is Large ribosomal subunit protein bL33 (64 aa).

The protein belongs to the bacterial ribosomal protein bL33 family.

In Picosynechococcus sp. (strain ATCC 27264 / PCC 7002 / PR-6) (Agmenellum quadruplicatum), this protein is Large ribosomal subunit protein bL33.